The sequence spans 222 residues: N-(5'-phosphoribosyl)anthranilate isomerase (222 aa).

The protein belongs to the TrpF family.

It catalyses the reaction N-(5-phospho-beta-D-ribosyl)anthranilate = 1-(2-carboxyphenylamino)-1-deoxy-D-ribulose 5-phosphate. The protein operates within amino-acid biosynthesis; L-tryptophan biosynthesis; L-tryptophan from chorismate: step 3/5. In Beijerinckia indica subsp. indica (strain ATCC 9039 / DSM 1715 / NCIMB 8712), this protein is N-(5'-phosphoribosyl)anthranilate isomerase.